The chain runs to 721 residues: Centlein (721 aa).

Positions Lys-52–Asn-164 form a coiled coil. Disordered stretches follow at residues Arg-156–Met-180 and Glu-259–Val-288. 2 stretches are compositionally biased toward basic and acidic residues: residues Pro-165–Ser-178 and Ile-267–Ala-284. 2 coiled-coil regions span residues Leu-345–Lys-515 and Gln-573–Ser-626. Thr-658 is subject to Phosphothreonine.

In terms of assembly, interacts with CEP250 and CEP68. Interacts with NEK2; the interaction leads to phosphorylation of CNTLN. In terms of processing, phosphorylated directly or indirectly by NEK2.

Its subcellular location is the cytoplasm. It localises to the cytoskeleton. It is found in the microtubule organizing center. The protein localises to the centrosome. The protein resides in the centriole. Functionally, required for centrosome cohesion and recruitment of CEP68 to centrosomes. In Rattus norvegicus (Rat), this protein is Centlein.